We begin with the raw amino-acid sequence, 2768 residues long: Thyroglobulin (2768 aa).

Residues 1 to 20 (MMTLVLWVSTLLSSVCLVAA) form the signal peptide. Tyr25 is modified (iodotyrosine; alternate). A Sulfotyrosine; alternate modification is found at Tyr25. Residue Tyr25 is modified to Thyroxine; alternate. Position 25 is a triiodothyronine; alternate (Tyr25). 4 Thyroglobulin type-1 domains span residues 32 to 93 (LRPC…PTAC), 94 to 161 (LSFC…PTRC), 162 to 298 (PRSC…RFRC), and 299 to 359 (PTKC…PLFC). 8 disulfide bridges follow: Cys35–Cys53, Cys64–Cys71, Cys73–Cys93, Cys97–Cys121, Cys132–Cys139, Cys141–Cys161, Cys165–Cys184, and Cys195–Cys236. Iodotyrosine is present on Tyr109. Asn111 carries an N-linked (GlcNAc...) asparagine glycan. Tyr150 carries the post-translational modification Iodotyrosine; alternate. Tyr150 is modified (diiodotyrosine; alternate). Asn199 carries N-linked (GlcNAc...) asparagine glycosylation. Residues Tyr235 and Tyr259 each carry the iodotyrosine modification. Cystine bridges form between Cys302–Cys320, Cys331–Cys337, Cys339–Cys365, Cys408–Cys608, Cys631–Cys636, Cys638–Cys658, Cys662–Cys687, and Cys698–Cys703. N-linked (GlcNAc...) asparagine glycans are attached at residues Asn484, Asn496, and Asn545. Thyroglobulin type-1 domains follow at residues 605–658 (AQAC…HPRC), 659–726 (PTKC…PKLC), 727–922 (PSVC…IPAC), 923–1074 (PGPC…MPQC), 1075–1146 (PTSC…SAQC), and 1147–1211 (PGLC…QPAC). An Iodotyrosine; alternate modification is found at Tyr704. Tyr704 is modified (thyroxine; alternate). Tyr704 bears the Triiodothyronine; alternate mark. At Tyr704 the chain carries Diiodotyrosine; alternate. Disulfide bonds link Cys705–Cys726, Cys730–Cys763, Cys774–Cys899, Cys901–Cys922, Cys926–Cys1032, Cys1043–Cys1050, Cys1052–Cys1074, Cys1078–Cys1109, Cys1127–Cys1146, Cys1150–Cys1170, Cys1182–Cys1189, Cys1191–Cys1211, Cys1216–Cys1265, Cys1232–Cys1246, Cys1306–Cys1356, and Cys1331–Cys1347. Asn748 carries an N-linked (GlcNAc...) asparagine glycan. Iodotyrosine is present on Tyr785. A glycan (N-linked (GlcNAc...) asparagine) is linked at Asn817. Tyr867 carries the post-translational modification Iodotyrosine; alternate. A Diiodotyrosine; alternate modification is found at Tyr867. Diiodotyrosine is present on Tyr884. Asn948 is a glycosylation site (N-linked (GlcNAc...) asparagine). Tyr993 bears the Iodotyrosine; alternate mark. Tyr993 carries the diiodotyrosine; alternate modification. Residue Asn1017 is glycosylated (N-linked (GlcNAc...) asparagine). Asn1141 is a glycosylation site (N-linked (GlcNAc...) asparagine). Tyr1310 carries the post-translational modification Iodotyrosine. Tyr1310 carries the post-translational modification Thyroxine. 2 N-linked (GlcNAc...) asparagine glycosylation sites follow: Asn1349 and Asn1365. Intrachain disulfides connect Cys1441-Cys1458, Cys1461-Cys1472, Cys1475-Cys1489, Cys1492-Cys1509, Cys1513-Cys1522, Cys1542-Cys1564, Cys1602-Cys1626, Cys1606-Cys1612, and Cys1638-Cys1661. 3 Type II repeats span residues 1455–1468 (PLGCVKCPEGSFSQ), 1469–1485 (DGKCTPCPAGTYQGQAG), and 1486–1502 (SSACIPCPRGRTTTITG). In terms of domain architecture, Thyroglobulin type-1 11 spans 1510-1564 (VTDCQRDEAGLQCDQNGQYQANQKDMDSGEVFCVDSEGQRLQWLQTEAGLSESQC). The stretch at 1602 to 1722 (CLADCADDEA…GTNLTDTHLF (121 aa)) is one Type IIIA repeat. N-linked (GlcNAc...) asparagine glycosylation is present at Asn1715. 4 cysteine pairs are disulfide-bonded: Cys1723–Cys1748, Cys1727–Cys1733, Cys1732–Cys1834, and Cys1759–Cys1776. One copy of the Type IIIB repeat lies at 1723-1891 (CLLACDQDSC…LFSAEQANLW (169 aa)). 2 N-linked (GlcNAc...) asparagine glycosylation sites follow: Asn1773 and Asn1866. Intrachain disulfides connect Cys1892–Cys1918, Cys1896–Cys1903, Cys1927–Cys1938, Cys1995–Cys2023, Cys1999–Cys2005, Cys2004–Cys2075, and Cys2034–Cys2047. A Type IIIA repeat occupies 1892 to 1994 (CLSRCAQEPV…EKLISNGFFE (103 aa)). Asn1937 carries N-linked (GlcNAc...) asparagine glycosylation. Residues 1995–2127 (CERLCDRDPC…SATRNFSLAQ (133 aa)) form a Type IIIB repeat. Asn2012 carries N-linked (GlcNAc...) asparagine glycosylation. Asn2122 carries N-linked (GlcNAc...) asparagine glycosylation. The stretch at 2128 to 2185 (DFCLQECSRHQDCLVTTLQIQQGVVRCVFYPDIQSCEHSLRSKTCWLLLHEEAAYIYR) is one Type IIIA repeat. Disulfide bonds link Cys2130–Cys2154, Cys2134–Cys2140, and Cys2163–Cys2172. At Tyr2184 the chain carries Iodotyrosine. The cholinesterase-like (ChEL) stretch occupies residues 2188–2768 (GAPLHQSDGI…LEPVPKSYSK (581 aa)). A glycan (N-linked (GlcNAc...) asparagine) is linked at Asn2251. Residues Cys2265 and Cys2282 are joined by a disulfide bond. 2 N-linked (GlcNAc...) asparagine glycosylation sites follow: Asn2296 and Asn2445. The cysteines at positions 2443 and 2454 are disulfide-linked. Tyr2541 is modified (thyroxine). Tyr2574 is subject to Iodotyrosine; alternate. Position 2574 is a thyroxine; alternate (Tyr2574). Tyr2574 is subject to Triiodothyronine; alternate. A Diiodotyrosine; alternate modification is found at Tyr2574. An N-linked (GlcNAc...) asparagine glycan is attached at Asn2583. Iodotyrosine occurs at positions 2588 and 2618. An intrachain disulfide couples Cys2592 to Cys2716. Tyr2698 is subject to Diiodotyrosine. The segment at 2731 to 2768 (GAKDAQLTKSGEEDLEVGPGSEEDFSGSLEPVPKSYSK) is disordered. The span at 2743-2755 (EDLEVGPGSEEDF) shows a compositional bias: acidic residues. Tyr2766 carries the iodotyrosine; alternate modification. The residue at position 2766 (Tyr2766) is a Thyroxine; alternate. Tyr2766 carries the post-translational modification Triiodothyronine; alternate. At Tyr2766 the chain carries Diiodotyrosine; alternate.

This sequence belongs to the type-B carboxylesterase/lipase family. In terms of assembly, monomer. Homodimer (via ChEL region); occurs in the endoplasmic reticulum and is required for export to the Golgi apparatus. Homooligomer; disulfide-linked; stored in this form in the thyroid follicle lumen. Iodinated on tyrosine residues by TPO. There are 4 pairs of iodinated tyrosines used for coupling: acceptor Tyr-25 is coupled to donor Tyr-150 or Tyr-235, acceptor Tyr-2574 is coupled to donor Tyr-2541, acceptor Tyr-2766 in monomer 1 is coupled to donor Tyr-2766 in monomer 2 and acceptor Tyr-1310 in monomer 1 is coupled to donor Tyr-109 in monomer 2. Post-translationally, sulfated tyrosines are desulfated during iodination. In terms of processing, undergoes sequential proteolysis by cathepsins to release thyroxine (T4) and triiodothyronine (T3) hormones. In the thyroid follicle lumen, cross-linked TG (storage form) is solubilized by limited proteolysis mediated by cathepsins CTSB and/or CTSL. Partially cleaved TG is further processed by CTSK/cathepsin K and/or CTSL resulting in the release of thyroxine (T4). Following endocytosis, further processing occurs leading to the release of triiodothyronine (T3) and more T4 hormones. Specifically expressed in the thyroid gland.

Its subcellular location is the secreted. Acts as a substrate for the production of iodinated thyroid hormones thyroxine (T4) and triiodothyronine (T3). The synthesis of T3 and T4 involves iodination of selected tyrosine residues of TG/thyroglobulin followed by their oxidative coupling. Following TG re-internalization and lysosomal-mediated proteolysis, T3 and T4 are released from the polypeptide backbone leading to their secretion into the bloodstream. One dimer produces 7 thyroid hormone molecules. This Rattus norvegicus (Rat) protein is Thyroglobulin (Tg).